Reading from the N-terminus, the 329-residue chain is DNA-directed RNA polymerase subunit alpha (329 aa).

An alpha N-terminal domain (alpha-NTD) region spans residues 1-234 (MSGSVTEFLK…EQLDAFVELR (234 aa)). Residues 248-329 (FDPILLRPVD…WPPESIAEKD (82 aa)) form an alpha C-terminal domain (alpha-CTD) region.

This sequence belongs to the RNA polymerase alpha chain family. Homodimer. The RNAP catalytic core consists of 2 alpha, 1 beta, 1 beta' and 1 omega subunit. When a sigma factor is associated with the core the holoenzyme is formed, which can initiate transcription.

It carries out the reaction RNA(n) + a ribonucleoside 5'-triphosphate = RNA(n+1) + diphosphate. DNA-dependent RNA polymerase catalyzes the transcription of DNA into RNA using the four ribonucleoside triphosphates as substrates. This Pseudoalteromonas atlantica (strain T6c / ATCC BAA-1087) protein is DNA-directed RNA polymerase subunit alpha.